We begin with the raw amino-acid sequence, 317 residues long: OVARIAN TUMOR DOMAIN-containing deubiquitinating enzyme 4 (317 aa).

Positions 168–306 (YSIIGIPGDG…FGHYDALLLH (139 aa)) constitute an OTU domain. Residue D176 is part of the active site. C179 functions as the Nucleophile in the catalytic mechanism. The active site involves H299.

This sequence belongs to the peptidase C65 family.

It localises to the cytoplasm. The enzyme catalyses Thiol-dependent hydrolysis of ester, thioester, amide, peptide and isopeptide bonds formed by the C-terminal Gly of ubiquitin (a 76-residue protein attached to proteins as an intracellular targeting signal).. Functionally, hydrolase that can remove conjugated ubiquitin from proteins in vitro and may therefore play an important regulatory role at the level of protein turnover by preventing degradation. Cysteine protease with a preference for 'Lys-63' over 'Lys-48'-linked over 'Met-1' ubiquitin (UB) tetramers (e.g. Ub3 and Ub4) as substrates. Also cleaves RUB-GST fusion. This chain is OVARIAN TUMOR DOMAIN-containing deubiquitinating enzyme 4, found in Arabidopsis thaliana (Mouse-ear cress).